The sequence spans 40 residues: Photosystem II reaction center protein J (40 aa).

A helical membrane pass occupies residues 8–28; sequence IPLWIIGTVAGILVIGLVGIF.

This sequence belongs to the PsbJ family. In terms of assembly, PSII is composed of 1 copy each of membrane proteins PsbA, PsbB, PsbC, PsbD, PsbE, PsbF, PsbH, PsbI, PsbJ, PsbK, PsbL, PsbM, PsbT, PsbX, PsbY, PsbZ, Psb30/Ycf12, at least 3 peripheral proteins of the oxygen-evolving complex and a large number of cofactors. It forms dimeric complexes.

It localises to the plastid. The protein resides in the chloroplast thylakoid membrane. One of the components of the core complex of photosystem II (PSII). PSII is a light-driven water:plastoquinone oxidoreductase that uses light energy to abstract electrons from H(2)O, generating O(2) and a proton gradient subsequently used for ATP formation. It consists of a core antenna complex that captures photons, and an electron transfer chain that converts photonic excitation into a charge separation. The chain is Photosystem II reaction center protein J from Spinacia oleracea (Spinach).